Reading from the N-terminus, the 384-residue chain is Zinc metalloproteinase nas-12 (384 aa).

The N-terminal stretch at 1-25 (MLYIPQFSIYFCLGYLLLFCKISNA) is a signal peptide. Residues 73 to 271 (VSIKGSSMNR…EKLNRLGQCG (199 aa)) form the Peptidase M12A domain. Intrachain disulfides connect Cys116–Cys270, Cys137–Cys156, Cys287–Cys325, Cys296–Cys318, and Cys305–Cys322. Position 164 (His164) interacts with Zn(2+). Residue Glu165 is part of the active site. Residues His168 and His174 each coordinate Zn(2+). The ShKT 1 domain maps to 287–325 (CQDVATAVSCEGNRRRGMCKNPFYKQMMIKSCQKTCRLC). Asn340 is a glycosylation site (N-linked (GlcNAc...) asparagine). 3 disulfide bridges follow: Cys348-Cys384, Cys355-Cys377, and Cys364-Cys381. The region spanning 348 to 384 (CEDKHPRCDIYSHNGFCTLPFYDDVRYQLCAKTCNLC) is the ShKT 2 domain.

The cofactor is Zn(2+). As to expression, expressed in pharyngeal glands.

It localises to the secreted. Functionally, metalloprotease. In Caenorhabditis elegans, this protein is Zinc metalloproteinase nas-12 (nas-12).